A 76-amino-acid chain; its full sequence is Kappa-actitoxin-Avd4m (76 aa).

The signal sequence occupies residues 1–19 (MNKALFLCLVVLCAAVVFA). Positions 20-31 (AEDLQKAKHAPF) are excised as a propeptide. Cystine bridges form between Cys37–Cys72, Cys39–Cys65, and Cys55–Cys73.

The protein belongs to the sea anemone type 3 (BDS) potassium channel toxin family. As to expression, weakly expressed in the ectodermal tissue from the distal and proximal tentacles, body wall, and oral disk.

It is found in the secreted. The protein localises to the nematocyst. Its function is as follows. Blocks Kv3 voltage-gated potassium channels. Reduces blood pressure. This is Kappa-actitoxin-Avd4m from Anemonia viridis (Snakelocks anemone).